A 214-amino-acid polypeptide reads, in one-letter code: Redox-sensing transcriptional repressor Rex (214 aa).

The H-T-H motif DNA-binding region spans 17 to 56; it reads LYYRIFKRFHADQVEKASSKQIADAMGIDSATVRRDFSYF. 91-96 is a binding site for NAD(+); it reads GCGNIG.

It belongs to the transcriptional regulatory Rex family. Homodimer.

The protein resides in the cytoplasm. Functionally, modulates transcription in response to changes in cellular NADH/NAD(+) redox state. This is Redox-sensing transcriptional repressor Rex from Streptococcus pyogenes serotype M1.